A 797-amino-acid chain; its full sequence is Glycoprotein gp2 (797 aa).

A signal peptide spans 1–25 (MGFIYARKLLLCMAVSIYAIGSTTT). 2 disordered regions span residues 24–188 (TTTE…TTAA) and 212–549 (AATT…EIVP). Residues 212–373 (AATTTAATTT…PDSSTGSTST (162 aa)) are compositionally biased toward low complexity. Residues 374-394 (AEPSSTFTLTPSTATPSTDQF) are compositionally biased toward polar residues. Composition is skewed to low complexity over residues 395-430 (TGSS…EAST) and 445-457 (TPDG…NTTP). The span at 466 to 492 (FADTQQTPDNGVSTQHTTINDHTTANA) shows a compositional bias: polar residues. Positions 495–505 (HAGHHRGRAGG) are enriched in basic residues. The N-linked (GlcNAc...) asparagine; by host glycan is linked to Asn-590. Residues 766 to 790 (FALVAATTLTVTILCLLCCLYCMLT) traverse the membrane as a helical segment.

The protein resides in the virion membrane. In terms of biological role, virulence factor. This Equine herpesvirus 1 (strain Ab4p) (EHV-1) protein is Glycoprotein gp2 (EUs4).